The chain runs to 509 residues: Subtelomeric hrmA-associated cluster protein AFUB_078990 (509 aa).

Part of the subtelomeric hrmA-associated cluster (HAC) containing genes that alter the hyphal surface (such as reduced total chitin or increased beta-glucan exposure) and perturb inter-hyphal interactions within the developing biofilms, resulting in a loss of vertically aligned polarized growing filaments. Consequently, this hypoxia-typic morphotype (called H-MORPH) with altered biofilm architecture leads to increased hypoxia fitness, increased host inflammation, rapid disease progression, and mortality in a murine model of invasive aspergillosis. In Aspergillus fumigatus (strain CBS 144.89 / FGSC A1163 / CEA10) (Neosartorya fumigata), this protein is Subtelomeric hrmA-associated cluster protein AFUB_078990.